Consider the following 605-residue polypeptide: Poly(3-hydroxyalkanoate) polymerase (605 aa).

One can recognise an AB hydrolase-1 domain in the interval 319–527 (IETAIDMIGV…VLAGSGHIAG (209 aa)). Cys341 is a catalytic residue.

The protein belongs to the PHA/PHB synthase family.

It is found in the cytoplasm. The chain is Poly(3-hydroxyalkanoate) polymerase (phaC) from Methylorubrum extorquens (Methylobacterium dichloromethanicum).